Reading from the N-terminus, the 101-residue chain is Urease subunit beta (101 aa).

It belongs to the urease beta subunit family. As to quaternary structure, heterotrimer of UreA (gamma), UreB (beta) and UreC (alpha) subunits. Three heterotrimers associate to form the active enzyme.

The protein resides in the cytoplasm. It catalyses the reaction urea + 2 H2O + H(+) = hydrogencarbonate + 2 NH4(+). Its pathway is nitrogen metabolism; urea degradation; CO(2) and NH(3) from urea (urease route): step 1/1. The chain is Urease subunit beta from Rhizobium etli (strain ATCC 51251 / DSM 11541 / JCM 21823 / NBRC 15573 / CFN 42).